The chain runs to 578 residues: Ribonuclease SLFN12 (578 aa).

At S368 the chain carries Phosphoserine. The tract at residues 551–560 (AENLYQIIGI) is mediates interaction with PDE3A. A Phosphoserine modification is found at S573.

Belongs to the Schlafen family. Subgroup II subfamily. As to quaternary structure, homodimer. Interacts with PDE3A; direct low affinity interaction which is stimulated by binding of 17beta-estradiol/E2 to PDE3A and that positively regulates the ribonuclease activity of SLFN12. Interacts with SERPINB12; as part of a pathway regulating cell differentiation. Phosphorylation at Ser-368 and Ser-573 negatively regulates the ribonuclease activity. Dephosphorylation is induced by the interaction with PDE3A and stimulates the rRNA ribonuclease activity.

The protein localises to the nucleus. Its subcellular location is the cytoplasm. The protein resides in the cytosol. In terms of biological role, ribonuclease which is part of an E2/17beta-estradiol-induced pro-apoptotic signaling pathway. E2 stabilizes the PDE3A/SLFN12 complex in the cytosol, promoting the dephosphorylation of SLFN12 and activating its pro-apoptotic ribosomal RNA/rRNA ribonuclease activity. This apoptotic pathway might be relevant in tissues with high concentration of E2 and be for instance involved in placenta remodeling. May play a role in cell differentiation. This chain is Ribonuclease SLFN12, found in Homo sapiens (Human).